The chain runs to 3401 residues: Genome polyprotein (3401 aa).

The Cytoplasmic segment spans residues Met-1–His-104. Residues Ser-101–Gly-117 constitute a propeptide, ER anchor for the capsid protein C, removed in mature form by serine protease NS3. The chain crosses the membrane as a helical span at residues Gly-105–Gly-125. The Extracellular segment spans residues Arg-126 to Arg-240. Asn-130 and Asn-146 each carry an N-linked (GlcNAc...) asparagine; by host glycan. The chain crosses the membrane as a helical span at residues Trp-241–Ser-261. Topologically, residues Asp-262–Lys-266 are cytoplasmic. A helical membrane pass occupies residues Val-267–Ser-281. The Extracellular portion of the chain corresponds to Thr-282–Ser-725. 5 cysteine pairs are disulfide-bonded: Cys-284/Cys-311, Cys-355/Cys-386, Cys-373/Cys-397, Cys-462/Cys-564, and Cys-581/Cys-611. Positions Asp-379–Gly-392 are fusion peptide. Residues Ile-726–Gly-746 traverse the membrane as a helical segment. At Val-747–Thr-753 the chain is on the extracellular side. Residues Met-754–Gly-774 form a helical membrane-spanning segment. The Extracellular portion of the chain corresponds to Glu-775–Ser-1122. Cystine bridges form between Cys-778-Cys-789, Cys-829-Cys-916, Cys-952-Cys-997, Cys-1054-Cys-1103, Cys-1065-Cys-1087, and Cys-1086-Cys-1090. Residues Asn-904 and Asn-981 are each glycosylated (N-linked (GlcNAc...) asparagine; by host). The helical transmembrane segment at Trp-1123–Phe-1143 threads the bilayer. Residues Thr-1144–Val-1198 lie on the Cytoplasmic side of the membrane. The helical transmembrane segment at Ala-1199–Phe-1219 threads the bilayer. Residues Lys-1220–Ser-1287 are Lumenal-facing. The chain crosses the membrane as a helical span at residues Met-1288–Trp-1308. At Arg-1309 to Ser-1352 the chain is on the cytoplasmic side. A helical transmembrane segment spans residues Trp-1353–Val-1373. Over Asn-1374–Gln-1376 the chain is Lumenal. Residues Ala-1377–Gly-1397 form a helical membrane-spanning segment. The Cytoplasmic segment spans residues Arg-1398–His-1447. An interacts with and activates NS3 protease region spans residues Leu-1404–Val-1443. Positions Val-1448 to Val-1468 form an intramembrane region, helical. Residues Thr-1469 to Thr-2154 lie on the Cytoplasmic side of the membrane. One can recognise a Peptidase S7 domain in the interval Gly-1481 to Leu-1661. Catalysis depends on charge relay system; for serine protease NS3 activity residues His-1532, Asp-1556, and Ser-1617. In terms of domain architecture, Helicase ATP-binding spans Ala-1665–Arg-1821. The segment at Arg-1669 to Lys-1672 is important for RNA-binding. Residue Tyr-1678–Thr-1685 coordinates ATP. Positions Asp-1769–His-1772 match the DEAH box motif. One can recognise a Helicase C-terminal domain in the interval Glu-1816–Glu-1995. The helical transmembrane segment at Ile-2155 to Trp-2175 threads the bilayer. Residues Pro-2176–Lys-2181 lie on the Lumenal side of the membrane. An intramembrane region (helical) is located at residues Met-2182–Gly-2200. Leu-2201 is a topological domain (lumenal). The helical transmembrane segment at Thr-2202–Pro-2222 threads the bilayer. The Cytoplasmic segment spans residues Glu-2223–Thr-2235. A helical membrane pass occupies residues Leu-2236 to Thr-2250. Topologically, residues Ala-2251–Gly-2285 are cytoplasmic. Positions Ala-2286–Ile-2306 form an intramembrane region, helical. At Arg-2307 to Met-2354 the chain is on the lumenal side. A helical transmembrane segment spans residues Leu-2355 to Leu-2375. At Arg-2376–Lys-2418 the chain is on the cytoplasmic side. The chain crosses the membrane as a helical span at residues Leu-2419–Phe-2439. Over Ser-2440–Pro-2467 the chain is Lumenal. Residues Met-2468 to Tyr-2488 form a helical membrane-spanning segment. The Cytoplasmic portion of the chain corresponds to Asn-2489–Leu-3401. In terms of domain architecture, mRNA cap 0-1 NS5-type MT spans Gly-2499–Asn-2763. Ser-2554 contacts S-adenosyl-L-methionine. Ser-2554 is modified (phosphoserine). Catalysis depends on Lys-2559, which acts as the For 2'-O-MTase activity. Positions 2584, 2585, 2602, 2603, 2629, and 2630 each coordinate S-adenosyl-L-methionine. Asp-2644 serves as the catalytic For 2'-O-MTase activity. Ile-2645 provides a ligand contact to S-adenosyl-L-methionine. Residues Lys-2680 and Glu-2716 each act as for 2'-O-MTase activity in the active site. Residue Tyr-2718 coordinates S-adenosyl-L-methionine. Positions Arg-2869–Arg-2902 match the Nuclear localization signal motif. Residues Glu-2936, His-2940, Cys-2945, and Cys-2948 each contribute to the Zn(2+) site. One can recognise a RdRp catalytic domain in the interval Gly-3026 to Ala-3178. Residues His-3213, Cys-3229, and Cys-3348 each contribute to the Zn(2+) site.

The protein in the N-terminal section; belongs to the class I-like SAM-binding methyltransferase superfamily. mRNA cap 0-1 NS5-type methyltransferase family. As to quaternary structure, homodimer. Interacts (via N-terminus) with host EXOC1 (via C-terminus); this interaction results in EXOC1 degradation through the proteasome degradation pathway. In terms of assembly, forms heterodimers with envelope protein E in the endoplasmic reticulum and Golgi. Homodimer; in the endoplasmic reticulum and Golgi. Interacts with protein prM. Interacts with non-structural protein 1. As to quaternary structure, homodimer; Homohexamer when secreted. Interacts with envelope protein E. NS1 interacts with NS4B. Interacts with host complement protein CFH; this interaction leads to the degradation of C3. In terms of assembly, interacts (via N-terminus) with serine protease NS3. Forms a heterodimer with serine protease NS3. May form homooligomers. As to quaternary structure, forms a heterodimer with NS2B. Interacts with non-structural protein 2A (via N-terminus). Interacts with NS4B. Interacts with unphosphorylated RNA-directed RNA polymerase NS5; this interaction stimulates RNA-directed RNA polymerase NS5 guanylyltransferase activity. NS3 interacts with host PDCD6IP; this interaction contributes to virion release. In terms of assembly, interacts with serine protease NS3. Homodimer. Interacts with host STAT2; this interaction prevents the establishment of cellular antiviral state. Interacts with serine protease NS3. Interacts with host TRIM23; this interaction leads to NS5 ubiquitination. In terms of processing, specific enzymatic cleavages in vivo yield mature proteins. The nascent capsid protein C contains a C-terminal hydrophobic domain that act as a signal sequence for translocation of prM into the lumen of the ER. Mature capsid protein C is cleaved at a site upstream of this hydrophobic domain by NS3. prM is cleaved in post-Golgi vesicles by a host furin, releasing the mature small envelope protein M, and peptide pr. Non-structural protein 2A-alpha, a C-terminally truncated form of non-structural protein 2A, results from partial cleavage by NS3. Specific enzymatic cleavages in vivo yield mature proteins peptide 2K acts as a signal sequence and is removed from the N-terminus of NS4B by the host signal peptidase in the ER lumen. Signal cleavage at the 2K-4B site requires a prior NS3 protease-mediated cleavage at the 4A-2K site. Cleaved in post-Golgi vesicles by a host furin, releasing the mature small envelope protein M, and peptide pr. This cleavage is incomplete as up to 30% of viral particles still carry uncleaved prM. Post-translationally, N-glycosylated. In terms of processing, N-glycosylated. The excreted form is glycosylated and this is required for efficient secretion of the protein from infected cells. Polyubiquitinated; ubiquitination is probably mediated by host TRIM23 and is prerequisite for NS5-STAT2 interaction. NS5 is not ISGylated or sumoylated. Post-translationally, phosphorylated on serines residues. This phosphorylation may trigger NS5 nuclear localization.

The protein localises to the virion. It is found in the host nucleus. The protein resides in the host cytoplasm. It localises to the host perinuclear region. Its subcellular location is the virion membrane. The protein localises to the host endoplasmic reticulum membrane. It is found in the secreted. The catalysed reaction is Selective hydrolysis of -Xaa-Xaa-|-Yaa- bonds in which each of the Xaa can be either Arg or Lys and Yaa can be either Ser or Ala.. It carries out the reaction RNA(n) + a ribonucleoside 5'-triphosphate = RNA(n+1) + diphosphate. The enzyme catalyses a ribonucleoside 5'-triphosphate + H2O = a ribonucleoside 5'-diphosphate + phosphate + H(+). It catalyses the reaction ATP + H2O = ADP + phosphate + H(+). The catalysed reaction is a 5'-end (5'-triphosphoguanosine)-ribonucleoside in mRNA + S-adenosyl-L-methionine = a 5'-end (N(7)-methyl 5'-triphosphoguanosine)-ribonucleoside in mRNA + S-adenosyl-L-homocysteine. It carries out the reaction a 5'-end (N(7)-methyl 5'-triphosphoguanosine)-ribonucleoside in mRNA + S-adenosyl-L-methionine = a 5'-end (N(7)-methyl 5'-triphosphoguanosine)-(2'-O-methyl-ribonucleoside) in mRNA + S-adenosyl-L-homocysteine + H(+). Functionally, plays a role in virus budding by binding to the cell membrane and gathering the viral RNA into a nucleocapsid that forms the core of a mature virus particle. During virus entry, may induce genome penetration into the host cytoplasm after hemifusion induced by the surface proteins. Can migrate to the cell nucleus where it modulates host functions. Its function is as follows. Inhibits RNA silencing by interfering with host Dicer. Prevents premature fusion activity of envelope proteins in trans-Golgi by binding to envelope protein E at pH6.0. After virion release in extracellular space, gets dissociated from E dimers. In terms of biological role, acts as a chaperone for envelope protein E during intracellular virion assembly by masking and inactivating envelope protein E fusion peptide. prM is the only viral peptide matured by host furin in the trans-Golgi network probably to avoid catastrophic activation of the viral fusion activity in acidic Golgi compartment prior to virion release. prM-E cleavage is inefficient, and many virions are only partially matured. These uncleaved prM would play a role in immune evasion. Functionally, may play a role in virus budding. Exerts cytotoxic effects by activating a mitochondrial apoptotic pathway through M ectodomain. May display a viroporin activity. Its function is as follows. Binds to host cell surface receptor and mediates fusion between viral and cellular membranes. Envelope protein is synthesized in the endoplasmic reticulum in the form of heterodimer with protein prM. They play a role in virion budding in the ER, and the newly formed immature particle is covered with 60 spikes composed of heterodimer between precursor prM and envelope protein E. The virion is transported to the Golgi apparatus where the low pH causes dissociation of PrM-E heterodimers and formation of E homodimers. prM-E cleavage is inefficient, and many virions are only partially matured. These uncleaved prM would play a role in immune evasion. Involved in immune evasion, pathogenesis and viral replication. Once cleaved off the polyprotein, is targeted to three destinations: the viral replication cycle, the plasma membrane and the extracellular compartment. Essential for viral replication. Required for formation of the replication complex and recruitment of other non-structural proteins to the ER-derived membrane structures. Excreted as a hexameric lipoparticle that plays a role against host immune response. Antagonizing the complement function. Binds to the host macrophages and dendritic cells. Inhibits signal transduction originating from Toll-like receptor 3 (TLR3). In terms of biological role, component of the viral RNA replication complex that functions in virion assembly and antagonizes the host immune response. Functionally, required cofactor for the serine protease function of NS3. May have membrane-destabilizing activity and form viroporins. Its function is as follows. Displays three enzymatic activities: serine protease, NTPase and RNA helicase. NS3 serine protease, in association with NS2B, performs its autocleavage and cleaves the polyprotein at dibasic sites in the cytoplasm: C-prM, NS2A-NS2B, NS2B-NS3, NS3-NS4A, NS4A-2K and NS4B-NS5. NS3 RNA helicase binds RNA and unwinds dsRNA in the 3' to 5' direction. Also plays a role in virus assembly. Regulates the ATPase activity of the NS3 helicase activity. NS4A allows NS3 helicase to conserve energy during unwinding. In terms of biological role, functions as a signal peptide for NS4B and is required for the interferon antagonism activity of the latter. Functionally, induces the formation of ER-derived membrane vesicles where the viral replication takes place. Inhibits interferon (IFN)-induced host STAT1 phosphorylation and nuclear translocation, thereby preventing the establishment of cellular antiviral state by blocking the IFN-alpha/beta pathway. Its function is as follows. Replicates the viral (+) and (-) RNA genome, and performs the capping of genomes in the cytoplasm. NS5 methylates viral RNA cap at guanine N-7 and ribose 2'-O positions. Besides its role in RNA genome replication, also prevents the establishment of cellular antiviral state by blocking the interferon-alpha/beta (IFN-alpha/beta) signaling pathway. IFN-I induces binding of NS5 to host IFN-activated transcription factor STAT2, preventing its transcriptional activity. Host TRIM23 is the E3 ligase that interacts with and polyubiquitinates NS5 to promote its binding to STAT2 and trigger IFN-I signaling inhibition. The sequence is that of Genome polyprotein from Edge Hill virus (EHV).